Consider the following 336-residue polypeptide: Tryptophan--tRNA ligase (336 aa).

ATP-binding positions include 11–13 (TTT) and 19–20 (GN). The short motif at 12–20 (TTGIPHLGN) is the 'HIGH' region element. Residue aspartate 145 coordinates L-tryptophan. Residues 157-159 (GRD), leucine 196, and 203-207 (KMSKS) contribute to the ATP site. Positions 203-207 (KMSKS) match the 'KMSKS' region motif.

Belongs to the class-I aminoacyl-tRNA synthetase family. As to quaternary structure, homodimer.

The protein resides in the cytoplasm. The catalysed reaction is tRNA(Trp) + L-tryptophan + ATP = L-tryptophyl-tRNA(Trp) + AMP + diphosphate + H(+). In terms of biological role, catalyzes the attachment of tryptophan to tRNA(Trp). This Neisseria meningitidis serogroup A / serotype 4A (strain DSM 15465 / Z2491) protein is Tryptophan--tRNA ligase.